Consider the following 348-residue polypeptide: uncharacterized protein (348 aa).

Belongs to the Mu gp47/PBSX XkdT family.

This is an uncharacterized protein from Bacillus subtilis (strain 168).